The sequence spans 493 residues: Glutamyl-tRNA(Gln) amidotransferase subunit A (493 aa).

Residues K78 and S158 each act as charge relay system in the active site. The active-site Acyl-ester intermediate is S182.

This sequence belongs to the amidase family. GatA subfamily. In terms of assembly, heterotrimer of A, B and C subunits.

It carries out the reaction L-glutamyl-tRNA(Gln) + L-glutamine + ATP + H2O = L-glutaminyl-tRNA(Gln) + L-glutamate + ADP + phosphate + H(+). Allows the formation of correctly charged Gln-tRNA(Gln) through the transamidation of misacylated Glu-tRNA(Gln) in organisms which lack glutaminyl-tRNA synthetase. The reaction takes place in the presence of glutamine and ATP through an activated gamma-phospho-Glu-tRNA(Gln). In Rickettsia canadensis (strain McKiel), this protein is Glutamyl-tRNA(Gln) amidotransferase subunit A.